We begin with the raw amino-acid sequence, 320 residues long: UDP-N-acetylenolpyruvoylglucosamine reductase (320 aa).

An FAD-binding PCMH-type domain is found at 35–216; that stretch reads RAGGPAQVLF…KQAMDEVQHH (182 aa). Arg181 is an active-site residue. The active-site Proton donor is the Ser230. The active site involves Glu300.

The protein belongs to the MurB family. Requires FAD as cofactor.

The protein localises to the cytoplasm. It carries out the reaction UDP-N-acetyl-alpha-D-muramate + NADP(+) = UDP-N-acetyl-3-O-(1-carboxyvinyl)-alpha-D-glucosamine + NADPH + H(+). The protein operates within cell wall biogenesis; peptidoglycan biosynthesis. Its function is as follows. Cell wall formation. This is UDP-N-acetylenolpyruvoylglucosamine reductase from Brucella anthropi (strain ATCC 49188 / DSM 6882 / CCUG 24695 / JCM 21032 / LMG 3331 / NBRC 15819 / NCTC 12168 / Alc 37) (Ochrobactrum anthropi).